The following is a 209-amino-acid chain: Orotate phosphoribosyltransferase (209 aa).

5-phospho-alpha-D-ribose 1-diphosphate contacts are provided by residues arginine 96, lysine 100, histidine 102, and 122-130 (EDLISTGGS). Serine 126 is an orotate binding site.

The protein belongs to the purine/pyrimidine phosphoribosyltransferase family. PyrE subfamily. In terms of assembly, homodimer. The cofactor is Mg(2+).

The catalysed reaction is orotidine 5'-phosphate + diphosphate = orotate + 5-phospho-alpha-D-ribose 1-diphosphate. Its pathway is pyrimidine metabolism; UMP biosynthesis via de novo pathway; UMP from orotate: step 1/2. In terms of biological role, catalyzes the transfer of a ribosyl phosphate group from 5-phosphoribose 1-diphosphate to orotate, leading to the formation of orotidine monophosphate (OMP). The sequence is that of Orotate phosphoribosyltransferase from Streptococcus thermophilus (strain ATCC BAA-491 / LMD-9).